An 894-amino-acid chain; its full sequence is Valine--tRNA ligase (894 aa).

A compositionally biased stretch (polar residues) spans 1-22; sequence MKSIQTPSKSHTNTKETPVMSQ. The disordered stretch occupies residues 1-28; the sequence is MKSIQTPSKSHTNTKETPVMSQEETKGY. Positions 69–79 match the 'HIGH' region motif; sequence PNVTGSLHIGH. The 'KMSKS' region signature appears at 554–558; the sequence is KMSKS. Residue Lys557 participates in ATP binding. Positions 832-894 form a coiled coil; sequence IISRLEKQQE…VKVELQGIKG (63 aa).

Belongs to the class-I aminoacyl-tRNA synthetase family. ValS type 1 subfamily. In terms of assembly, monomer.

The protein localises to the cytoplasm. The catalysed reaction is tRNA(Val) + L-valine + ATP = L-valyl-tRNA(Val) + AMP + diphosphate. Its function is as follows. Catalyzes the attachment of valine to tRNA(Val). As ValRS can inadvertently accommodate and process structurally similar amino acids such as threonine, to avoid such errors, it has a 'posttransfer' editing activity that hydrolyzes mischarged Thr-tRNA(Val) in a tRNA-dependent manner. In Wolinella succinogenes (strain ATCC 29543 / DSM 1740 / CCUG 13145 / JCM 31913 / LMG 7466 / NCTC 11488 / FDC 602W) (Vibrio succinogenes), this protein is Valine--tRNA ligase.